Here is a 405-residue protein sequence, read N- to C-terminus: Argininosuccinate synthase (405 aa).

Residues 10 to 18 and A37 each bind ATP; that span reads AYSGGLDTS. Positions 88 and 93 each coordinate L-citrulline. G118 serves as a coordination point for ATP. Residues T120, N124, and D125 each coordinate L-aspartate. N124 contributes to the L-citrulline binding site. R128, S177, S186, E263, and Y275 together coordinate L-citrulline.

This sequence belongs to the argininosuccinate synthase family. Type 1 subfamily. As to quaternary structure, homotetramer.

The protein localises to the cytoplasm. The enzyme catalyses L-citrulline + L-aspartate + ATP = 2-(N(omega)-L-arginino)succinate + AMP + diphosphate + H(+). It participates in amino-acid biosynthesis; L-arginine biosynthesis; L-arginine from L-ornithine and carbamoyl phosphate: step 2/3. The sequence is that of Argininosuccinate synthase from Acetivibrio thermocellus (strain ATCC 27405 / DSM 1237 / JCM 9322 / NBRC 103400 / NCIMB 10682 / NRRL B-4536 / VPI 7372) (Clostridium thermocellum).